The primary structure comprises 184 residues: Peptide deformylase (184 aa).

Cys111 and His154 together coordinate Fe cation. Glu155 is an active-site residue. His158 serves as a coordination point for Fe cation.

This sequence belongs to the polypeptide deformylase family. The cofactor is Fe(2+).

It carries out the reaction N-terminal N-formyl-L-methionyl-[peptide] + H2O = N-terminal L-methionyl-[peptide] + formate. Functionally, removes the formyl group from the N-terminal Met of newly synthesized proteins. Requires at least a dipeptide for an efficient rate of reaction. N-terminal L-methionine is a prerequisite for activity but the enzyme has broad specificity at other positions. This is Peptide deformylase from Lactobacillus gasseri (strain ATCC 33323 / DSM 20243 / BCRC 14619 / CIP 102991 / JCM 1131 / KCTC 3163 / NCIMB 11718 / NCTC 13722 / AM63).